We begin with the raw amino-acid sequence, 379 residues long: Anhydro-N-acetylmuramic acid kinase (379 aa).

9–16 (GTSVDGID) serves as a coordination point for ATP.

Belongs to the anhydro-N-acetylmuramic acid kinase family.

The catalysed reaction is 1,6-anhydro-N-acetyl-beta-muramate + ATP + H2O = N-acetyl-D-muramate 6-phosphate + ADP + H(+). Its pathway is amino-sugar metabolism; 1,6-anhydro-N-acetylmuramate degradation. It participates in cell wall biogenesis; peptidoglycan recycling. Functionally, catalyzes the specific phosphorylation of 1,6-anhydro-N-acetylmuramic acid (anhMurNAc) with the simultaneous cleavage of the 1,6-anhydro ring, generating MurNAc-6-P. Is required for the utilization of anhMurNAc either imported from the medium or derived from its own cell wall murein, and thus plays a role in cell wall recycling. The sequence is that of Anhydro-N-acetylmuramic acid kinase from Picosynechococcus sp. (strain ATCC 27264 / PCC 7002 / PR-6) (Agmenellum quadruplicatum).